The primary structure comprises 362 residues: Histidinol-phosphate aminotransferase (362 aa).

Position 220 is an N6-(pyridoxal phosphate)lysine (K220).

Belongs to the class-II pyridoxal-phosphate-dependent aminotransferase family. Histidinol-phosphate aminotransferase subfamily. In terms of assembly, homodimer. Requires pyridoxal 5'-phosphate as cofactor.

It carries out the reaction L-histidinol phosphate + 2-oxoglutarate = 3-(imidazol-4-yl)-2-oxopropyl phosphate + L-glutamate. The protein operates within amino-acid biosynthesis; L-histidine biosynthesis; L-histidine from 5-phospho-alpha-D-ribose 1-diphosphate: step 7/9. The chain is Histidinol-phosphate aminotransferase from Rhodospirillum centenum (strain ATCC 51521 / SW).